The sequence spans 280 residues: Fructose-1,6-bisphosphatase/inositol-1-monophosphatase (280 aa).

Mg(2+)-binding residues include glutamate 73, aspartate 94, leucine 96, and aspartate 97. Substrate is bound by residues 97-99 (DGT), arginine 195, valine 200, and arginine 219. Position 226 (aspartate 226) interacts with Mg(2+).

The protein belongs to the inositol monophosphatase superfamily. FBPase class 4 family. Requires Mg(2+) as cofactor.

The catalysed reaction is beta-D-fructose 1,6-bisphosphate + H2O = beta-D-fructose 6-phosphate + phosphate. The enzyme catalyses a myo-inositol phosphate + H2O = myo-inositol + phosphate. Functionally, phosphatase with broad specificity; it can dephosphorylate fructose 1,6-bisphosphate, and both D and L isomers of inositol-1-phosphate (I-1-P). This is Fructose-1,6-bisphosphatase/inositol-1-monophosphatase (suhB) from Methanothermobacter thermautotrophicus (strain ATCC 29096 / DSM 1053 / JCM 10044 / NBRC 100330 / Delta H) (Methanobacterium thermoautotrophicum).